Here is a 473-residue protein sequence, read N- to C-terminus: Hyaluronidase-2 (473 aa).

Positions 1-20 (MRAGLGPIITLALVLEVAWA) are cleaved as a signal peptide. 2 disulfide bridges follow: Cys-47–Cys-340 and Cys-211–Cys-227. N-linked (GlcNAc...) asparagine glycans are attached at residues Asn-74 and Asn-103. Glu-135 functions as the Proton donor in the catalytic mechanism. An N-linked (GlcNAc...) asparagine glycan is attached at Asn-357. Positions 361–439 (ATQYCSWTQC…YLGWGGEQCQ (79 aa)) constitute an EGF-like domain. 3 disulfides stabilise this stretch: Cys-365–Cys-376, Cys-370–Cys-427, and Cys-429–Cys-438. An N-linked (GlcNAc...) asparagine glycan is attached at Asn-390. Asn-448 is lipidated: GPI-anchor amidated asparagine; alternate. N-linked (GlcNAc...) asparagine; alternate glycosylation is present at Asn-448. Positions 449–473 (ASRAWAGSHLTSLLGLVAVALTWTL) are cleaved as a propeptide — removed in mature form.

Belongs to the glycosyl hydrolase 56 family. Interacts with MST1R. Widely expressed, with highest expression levels in kidney, lung and liver (at protein level).

It localises to the cell membrane. The enzyme catalyses Random hydrolysis of (1-&gt;4)-linkages between N-acetyl-beta-D-glucosamine and D-glucuronate residues in hyaluronate.. Catalyzes hyaluronan degradation into small fragments that are endocytosed and degraded in lysosomes by HYAL1 and exoglycosidases. Essential for the breakdown of extracellular matrix hyaluronan. This is Hyaluronidase-2 (Hyal2) from Mus musculus (Mouse).